Reading from the N-terminus, the 1317-residue chain is WASH complex subunit 2 (1317 aa).

The segment at 1–219 (MNRTSPDSER…VGSDRGSIVD (219 aa)) is sufficient for interaction with WASHC3, WASHC4 and WASHC5; required for interaction with WASHC1. 5 positions are modified to phosphoserine: S157, S159, S204, S205, and S209. Low complexity predominate over residues 201–213 (GELSSEEGSVGSD). A disordered region spans residues 201-630 (GELSSEEGSV…RKSKGELWDS (430 aa)). Acidic residues-rich tracts occupy residues 219–232 (DSEEEKEEEESDED) and 250–274 (DEEEDDDGDLFADSEKEGDDIEDIE). Position 284 is a phosphoserine (S284). Basic and acidic residues-rich tracts occupy residues 289-325 (LAARIKGDMSNQLKEEQIADGKPQKTMKEKKEKRTPP) and 366-376 (DLFRETSRDRP). T323 carries the post-translational modification Phosphothreonine. Positions 348–582 (SRGGLFSGQG…QVSSQQPQSQ (235 aa)) are sufficient for interaction with CCDC93. Residues 349-1317 (RGGLFSGQGL…DDPLNAFGSQ (969 aa)) form an interaction with VPS35 region. The short motif at 358-368 (LFDDEDESDLF) is the LFa 1 element. A compositionally biased stretch (low complexity) spans 379 to 399 (APVSEESSSPKPGKKIPAGAV). S385 and S387 each carry phosphoserine. 2 short sequence motifs (LFa) span residues 433–445 (LFDDNDDDDDNFF) and 464–473 (IFDDEEGDLF). The segment covering 500–518 (TLPSSKNPKLVSETKTQKG) has biased composition (polar residues). Short sequence motifs (LFa) lie at residues 519 to 530 (LFSDEEDSEDLF) and 554 to 565 (LFGDEDEEDNLF). A phosphoserine mark is found at S521 and S526. Over residues 529 to 548 (LFSSQNSSKSKSASLLSSQL) the composition is skewed to low complexity. The span at 569–582 (PAKKQVSSQQPQSQ) shows a compositional bias: low complexity. Residues 583–592 (EKPKPSEQPK) are compositionally biased toward basic and acidic residues. The short motif at 599–611 (LFSSDEEDQWNIT) is the LFa 6 element. Phosphoserine occurs at positions 601 and 602. A compositionally biased stretch (basic and acidic residues) spans 613–627 (SHTKLATDRKSKGEL). 2 consecutive short sequence motifs (LFa) follow at residues 646 to 657 (LFEEDDDEADLF) and 673 to 685 (LFEDDDDSGSSLF). The tract at residues 667–817 (TQRTSLLFED…GRPKSTGVFQ (151 aa)) is disordered. Residue S710 is modified to Phosphoserine. A compositionally biased stretch (basic and acidic residues) spans 717-744 (VPSRVKSVDVKVGNGKEADVAKVTEKEG). Residues S763 and S778 each carry the phosphoserine modification. Over residues 788-810 (EDQSNTHVSKNDAEKGLKTDGRP) the composition is skewed to basic and acidic residues. Short sequence motifs (LFa) lie at residues 815–823 (VFQDEELLF) and 832–838 (DPDVDLF). Position 853 is a phosphoserine (S853). Positions 854–864 (LFGDDEDYDLF) match the LFa 11 motif. Disordered regions lie at residues 867–926 (AKTQ…REPS) and 960–1079 (ELAF…AAPP). Residues 874–906 (PEKKGALKKDRPVSLKNEEAPESTEGSKEKSLW) are compositionally biased toward basic and acidic residues. Positions 912–1317 (QDSSGLTPFK…DDPLNAFGSQ (406 aa)) are interaction with phospholipids. A compositionally biased stretch (basic residues) spans 1003–1021 (NKSRVKVRGKRRPQTRAAR). A required for interaction with F-actin-capping protein subunit alpha (CAPZA1 or CAPZA2 or CAPZA3) region spans residues 1004 to 1022 (KSRVKVRGKRRPQTRAARR). A phosphoserine mark is found at S1029, S1047, S1064, and S1092. An LFa 12 motif is present at residues 1107-1114 (LFDSGDIF). The disordered stretch occupies residues 1119-1141 (GSQSMEGTKVKAAETPAHLSGGS). 6 consecutive short sequence motifs (LFa) follow at residues 1147 to 1161 (VFPALSEASSTDDLF), 1177 to 1185 (LLEDEDDLF), 1210 to 1216 (IFEDDIF), 1238 to 1246 (LFDDNIDIF), 1266 to 1275 (VFDDDTDDIF), and 1306 to 1314 (IFDDPLNAF). Residues S1152, S1155, and S1156 each carry the phosphoserine modification. A disordered region spans residues 1158-1183 (DDLFQTVKPRPAKKRNPFPLLEDEDD). The tract at residues 1277–1317 (SGLQAKKSKPKSQSAEATSELRSDHKVSNIFDDPLNAFGSQ) is disordered. At S1316 the chain carries Phosphoserine.

This sequence belongs to the FAM21 family. As to quaternary structure, component of the WASH core complex also described as WASH regulatory complex SHRC composed of WASHC1, WASHC2, WASHC3, WASHC4 and WASHC5; in the complex interacts (via N-terminus) directly with WASHC1. The WASH core complex associates via WASHC2 with the F-actin-capping protein dimer (formed by CAPZA1, CAPZA2 or CAPZA3 and CAPZB) in a transient or substoichiometric manner which was initially described as WASH complex. Interacts with VPS35; mediates the association with the retromer CSC complex. Interacts with FKBP15. Interacts with CCDC93, CCDC22, C16orf62 homolog; indicative for an association of the WASH core complex with the CCC complex. Directly interacts with TBC1D23.

It localises to the early endosome membrane. Its subcellular location is the cell membrane. Acts as a component of the WASH core complex that functions as a nucleation-promoting factor (NPF) at the surface of endosomes, where it recruits and activates the Arp2/3 complex to induce actin polymerization, playing a key role in the fission of tubules that serve as transport intermediates during endosome sorting. Mediates the recruitment of the WASH core complex to endosome membranes via binding to phospholipids and VPS35 of the retromer CSC. Mediates the recruitment of the F-actin-capping protein dimer to the WASH core complex probably promoting localized F-actin polymerization needed for vesicle scission. Via its C-terminus binds various phospholipids, most strongly phosphatidylinositol 4-phosphate (PtdIns-(4)P), phosphatidylinositol 5-phosphate (PtdIns-(5)P) and phosphatidylinositol 3,5-bisphosphate (PtdIns-(3,5)P2). Involved in the endosome-to-plasma membrane trafficking and recycling of SNX27-retromer-dependent cargo proteins, such as GLUT1. Required for the association of DNAJC13, ENTR1, ANKRD50 with retromer CSC subunit VPS35. Required for the endosomal recruitment of CCC complex subunits COMMD1, CCDC93 and C16orf62 homolog. The polypeptide is WASH complex subunit 2 (Cricetulus griseus (Chinese hamster)).